The sequence spans 471 residues: UDP-N-acetylmuramate--L-alanine ligase (471 aa).

114-120 (GTHGKTT) is a binding site for ATP.

It belongs to the MurCDEF family.

Its subcellular location is the cytoplasm. The enzyme catalyses UDP-N-acetyl-alpha-D-muramate + L-alanine + ATP = UDP-N-acetyl-alpha-D-muramoyl-L-alanine + ADP + phosphate + H(+). It functions in the pathway cell wall biogenesis; peptidoglycan biosynthesis. In terms of biological role, cell wall formation. The chain is UDP-N-acetylmuramate--L-alanine ligase from Methylobacterium sp. (strain 4-46).